A 193-amino-acid polypeptide reads, in one-letter code: uncharacterized protein (193 aa).

This is an uncharacterized protein from Methanocaldococcus jannaschii (strain ATCC 43067 / DSM 2661 / JAL-1 / JCM 10045 / NBRC 100440) (Methanococcus jannaschii).